The following is a 585-amino-acid chain: Bestrophin-1 (585 aa).

Residues 1-31 (MTITYTSQVANARLGSFSRLLLCWRGSIYKL) lie on the Cytoplasmic side of the membrane. A10 lines the Ca(2+) pocket. Residues 32–51 (LYGEFLIFLLCYYIIRFIYR) form a helical membrane-spanning segment. The Extracellular portion of the chain corresponds to 52 to 60 (LALTEEQQL). Residues 61 to 82 (MFEKLTLYCDSYIQLIPISFVL) traverse the membrane as a helical segment. Residues 83–237 (GFYVTLVVTR…DWISIPLVYT (155 aa)) lie on the Cytoplasmic side of the membrane. A helical transmembrane segment spans residues 238–255 (QVVTVAVYSFFLTCLVGR). Residues 256-274 (QFLNPAKAYPGHELDLVVP) lie on the Extracellular side of the membrane. The chain crosses the membrane as a helical span at residues 275–288 (VFTFLQFFFYVGWL). Residues 289 to 585 (KVAEQLINPF…ALENRDEAHS (297 aa)) lie on the Cytoplasmic side of the membrane. Positions 293, 296, 301, and 304 each coordinate Ca(2+). An auto-inhibitory segment region spans residues 346-379 (PYTAASAQFRRASFMGSTFNISLNKEEMEFQPNQ).

It belongs to the anion channel-forming bestrophin (TC 1.A.46) family. Calcium-sensitive chloride channel subfamily. As to quaternary structure, interacts with YWHAG; this interaction promotes the ligand-gated L-glutamate channel activity leading to the positive regulation of NMDA glutamate receptor activity through the L-glutamate secretion. Predominantly expressed in the basolateral membrane of the retinal pigment epithelium.

The protein resides in the cell membrane. Its subcellular location is the basolateral cell membrane. It carries out the reaction chloride(in) = chloride(out). It catalyses the reaction hydrogencarbonate(in) = hydrogencarbonate(out). The enzyme catalyses 4-aminobutanoate(in) = 4-aminobutanoate(out). The catalysed reaction is L-glutamate(out) = L-glutamate(in). Inactivated by sulfhydryl-reactive agents. Its function is as follows. Ligand-gated anion channel that allows the movement of anions across cell membranes when activated by calcium (Ca2+). Allows the movement of chloride and hydrogencarbonate. Found in a partially open conformation leading to significantly smaller chloride movement. Upon F2R/PAR-1 activation, the sequestered calcium is released into the cytosol of astrocytes, leading to the (Ca2+)-dependent release of L-glutamate into the synaptic cleft that targets the neuronal postsynaptic GRIN2A/NMDAR receptor resulting in the synaptic plasticity regulation. Upon activation of the norepinephrine-alpha-1 adrenergic receptor signaling pathway, transports as well D-serine than L-glutamate in a (Ca2+)-dependent manner, leading to activation of adjacent NMDAR receptors and therefore regulates the heterosynaptic long-term depression and metaplasticity during initial memory acquisition. Releases the 4-aminobutanoate neurotransmitter in a (Ca2+)-dependent manner, and participates in its tonic release from cerebellar glial cells. This Homo sapiens (Human) protein is Bestrophin-1.